The chain runs to 95 residues: Sec-independent protein translocase protein TatA (95 aa).

The chain crosses the membrane as a helical span at residues 1-21 (MGSMSVWHWVIVAVVVMLLFG). Residues 42 to 95 (GMADDETQPNTATSVPPVGPNDPVRTLPHQGAPGTAPQPPHVQPHVSAGDHKAV) form a disordered region.

Belongs to the TatA/E family. In terms of assembly, the Tat system comprises two distinct complexes: a TatABC complex, containing multiple copies of TatA, TatB and TatC subunits, and a separate TatA complex, containing only TatA subunits. Substrates initially bind to the TatABC complex, which probably triggers association of the separate TatA complex to form the active translocon.

It localises to the cell inner membrane. Part of the twin-arginine translocation (Tat) system that transports large folded proteins containing a characteristic twin-arginine motif in their signal peptide across membranes. TatA could form the protein-conducting channel of the Tat system. The chain is Sec-independent protein translocase protein TatA from Methylorubrum extorquens (strain CM4 / NCIMB 13688) (Methylobacterium extorquens).